The following is a 109-amino-acid chain: Meiotically up-regulated gene 153 protein (109 aa).

The protein localises to the mitochondrion. Its function is as follows. Has a role in meiosis. The polypeptide is Meiotically up-regulated gene 153 protein (mug153) (Schizosaccharomyces pombe (strain 972 / ATCC 24843) (Fission yeast)).